Here is a 122-residue protein sequence, read N- to C-terminus: Large ribosomal subunit protein bL12 (122 aa).

This sequence belongs to the bacterial ribosomal protein bL12 family. As to quaternary structure, homodimer. Part of the ribosomal stalk of the 50S ribosomal subunit. Forms a multimeric L10(L12)X complex, where L10 forms an elongated spine to which 2 to 4 L12 dimers bind in a sequential fashion. Binds GTP-bound translation factors.

In terms of biological role, forms part of the ribosomal stalk which helps the ribosome interact with GTP-bound translation factors. Is thus essential for accurate translation. The sequence is that of Large ribosomal subunit protein bL12 from Pseudomonas entomophila (strain L48).